The primary structure comprises 312 residues: Malate dehydrogenase (312 aa).

Residues 12–17 (GAGFTG) and aspartate 36 each bind NAD(+). 2 residues coordinate substrate: arginine 87 and arginine 93. Residues asparagine 100 and 123-125 (LTN) each bind NAD(+). Asparagine 125 is a binding site for substrate. Residue serine 149 is modified to Phosphoserine. Arginine 156 lines the substrate pocket. The active-site Proton acceptor is the histidine 180.

Belongs to the LDH/MDH superfamily. MDH type 3 family.

It catalyses the reaction (S)-malate + NAD(+) = oxaloacetate + NADH + H(+). In terms of biological role, catalyzes the reversible oxidation of malate to oxaloacetate. This Bacillus mycoides (strain KBAB4) (Bacillus weihenstephanensis) protein is Malate dehydrogenase.